The sequence spans 286 residues: Shikimate dehydrogenase (NADP(+)) (286 aa).

Residues 22–24 (SLS) and Thr69 contribute to the shikimate site. The active-site Proton acceptor is Lys73. An NADP(+)-binding site is contributed by Glu85. Shikimate-binding residues include Asn94 and Asp109. NADP(+) contacts are provided by residues 133 to 137 (GAGGA) and Val231. Tyr233 lines the shikimate pocket. Residue Gly254 participates in NADP(+) binding.

The protein belongs to the shikimate dehydrogenase family. In terms of assembly, homodimer.

The catalysed reaction is shikimate + NADP(+) = 3-dehydroshikimate + NADPH + H(+). It participates in metabolic intermediate biosynthesis; chorismate biosynthesis; chorismate from D-erythrose 4-phosphate and phosphoenolpyruvate: step 4/7. Involved in the biosynthesis of the chorismate, which leads to the biosynthesis of aromatic amino acids. Catalyzes the reversible NADPH linked reduction of 3-dehydroshikimate (DHSA) to yield shikimate (SA). The chain is Shikimate dehydrogenase (NADP(+)) from Alkaliphilus metalliredigens (strain QYMF).